Consider the following 523-residue polypeptide: Frizzled-2 (523 aa).

The FZ domain maps to 1–120; that stretch reads PDHGFCQPIS…HGAEQICVGQ (120 aa). Residues 1 to 205 lie on the Extracellular side of the membrane; it reads PDHGFCQPIS…EDEIRFARVW (205 aa). Cystine bridges form between C6–C67, C14–C60, C51–C88, C77–C117, and C81–C105. An N-linked (GlcNAc...) asparagine glycan is attached at N20. N121 is a glycosylation site (N-linked (GlcNAc...) asparagine). A helical transmembrane segment spans residues 206-226; it reads ILVWSVLCCASTFFTVTTYLV. Topologically, residues 227–237 are cytoplasmic; that stretch reads DMQRFRYPERP. The helical transmembrane segment at 238-258 threads the bilayer; that stretch reads IIFLSGCYTMVSVAYIAGFVL. Residues 259-285 are Extracellular-facing; it reads EERVVCNERFQEDGYRTVVQGTKKEGC. Residues 286–306 traverse the membrane as a helical segment; the sequence is TILFMMLYFFSMASSIWWVIL. Topologically, residues 307-328 are cytoplasmic; it reads SLTWFLAAGMKWGHEAIEANSQ. A helical transmembrane segment spans residues 329–349; it reads YFHLAAWAVPAVKTITILAMG. Residues 350 to 372 lie on the Extracellular side of the membrane; it reads QIDGDLLSGVCFVGLNGIDPLRG. A helical transmembrane segment spans residues 373–393; that stretch reads FVLAPLFVYLFIGTSFLLAGF. The Cytoplasmic segment spans residues 394–419; the sequence is VSLFRIRTIMKHGGTKTEKLERLMVR. The helical transmembrane segment at 420–440 threads the bilayer; that stretch reads IGVFSVLYTVPATIVIACYFY. Residues 441–477 are Extracellular-facing; sequence EQAFRQHWERSWISQHCKSLAIPCPLHFTPRMTPDFT. A helical transmembrane segment spans residues 478-498; sequence VYMIKYLMTLIVGITSGFWIF. The Cytoplasmic segment spans residues 499–523; sequence SGKTLHSWRKFYTRLTNSRQGETTV. The Lys-Thr-X-X-X-Trp motif, mediates interaction with the PDZ domain of Dvl family members signature appears at 501–506; the sequence is KTLHSW. The PDZ-binding signature appears at 521–523; sequence TTV.

Belongs to the G-protein coupled receptor Fz/Smo family. As to expression, expressed in the developing head and limbs. Expressed broadly in cranial ectoderm. Also expressed in the developing somites (dermomyotome) and in other cranial placodes, including the olfactory, lens, and otic placodes (rostral rim of the vesicle).

It is found in the membrane. Its subcellular location is the cell membrane. Its function is as follows. Receptor for Wnt proteins. Most of frizzled receptors are coupled to the beta-catenin canonical signaling pathway, which leads to the activation of disheveled proteins, inhibition of GSK-3 kinase, nuclear accumulation of beta-catenin and activation of Wnt target genes. A second signaling pathway involving PKC and calcium fluxes has been seen for some family members, but it is not yet clear if it represents a distinct pathway or if it can be integrated in the canonical pathway, as PKC seems to be required for Wnt-mediated inactivation of GSK-3 kinase. Both pathways seem to involve interactions with G-proteins. May be involved in transduction and intercellular transmission of polarity information during tissue morphogenesis and/or in differentiated tissues. This chain is Frizzled-2 (FZD2), found in Gallus gallus (Chicken).